The following is a 441-amino-acid chain: Glutamate-1-semialdehyde 2,1-aminomutase (441 aa).

Lys-279 carries the post-translational modification N6-(pyridoxal phosphate)lysine.

Belongs to the class-III pyridoxal-phosphate-dependent aminotransferase family. HemL subfamily. As to quaternary structure, homodimer. Pyridoxal 5'-phosphate serves as cofactor.

It localises to the cytoplasm. The enzyme catalyses (S)-4-amino-5-oxopentanoate = 5-aminolevulinate. It participates in porphyrin-containing compound metabolism; protoporphyrin-IX biosynthesis; 5-aminolevulinate from L-glutamyl-tRNA(Glu): step 2/2. The sequence is that of Glutamate-1-semialdehyde 2,1-aminomutase from Leptospira borgpetersenii serovar Hardjo-bovis (strain JB197).